Here is a 266-residue protein sequence, read N- to C-terminus: Gap junction beta-4 protein (266 aa).

The stretch at N2 to V13 is an intramembrane region. Residues N14–L20 are Cytoplasmic-facing. A helical membrane pass occupies residues G21 to A40. The Extracellular portion of the chain corresponds to E41–H73. 3 disulfide bridges follow: C53-C175, C60-C169, and C64-C164. A helical membrane pass occupies residues V74–H94. The Cytoplasmic portion of the chain corresponds to V95–T130. A helical membrane pass occupies residues Y131–C151. The Extracellular segment spans residues I152–K184. A helical transmembrane segment spans residues V185 to V205. Topologically, residues V206 to P266 are cytoplasmic.

The protein belongs to the connexin family. Beta-type (group I) subfamily. A hemichannel or connexon is composed of a hexamer of connexins. A functional gap junction is formed by the apposition of two hemichannels. Forms heteromeric channels with GJB2. Detected in cochlea (at protein level). Detected in cochlea. Expressed in skin.

It is found in the cell membrane. It localises to the cell junction. The protein resides in the gap junction. Its function is as follows. Structural component of gap junctions. Gap junctions are dodecameric channels that connect the cytoplasm of adjoining cells. They are formed by the docking of two hexameric hemichannels, one from each cell membrane. Small molecules and ions diffuse from one cell to a neighboring cell via the central pore. The protein is Gap junction beta-4 protein (Gjb4) of Mus musculus (Mouse).